Consider the following 459-residue polypeptide: MSNRFAVILAAGKGTRMKSKLYKVLHPVCGKPMVQHVVDQVSQLGLQKLVTVVGHGAEMVQEQLGNVSEFALQAEQLGTAHAVDQAAGVLANEEGTTLVICGDTPLITAETMEALLQQHKEAGAMATVLTAYIEEPAGYGRIVRNENGHVEKIVEHKDANEKELAIKEINTGTYCFDNKALFASLSKVSNDNVQGEYYLPDVIEILKNEGHIVSAYQTEHFDETLGVNDRVALSQAEIIMKNRINRKNMVNGVTIIDPSNTYISADAIIGSDTVLHPGTIIEGNTVIGSDCEIGPHTVIRDSEIGDRTTIRQSTVHDSKLGTEVSVGPFAHIRPDSVIGDEVRVGNFVEIKKTVFGNRSKASHLSYIGDAQVGEDVNLGCGSITVNYDGKNKFKTVIGNGVFIGCNSNLVAPVTVEDGAYVAAGSTITENVPSKALSVARARQVNKEDYVDQLLNKKKS.

Positions 1–230 (MSNRFAVILA…FDETLGVNDR (230 aa)) are pyrophosphorylase. UDP-N-acetyl-alpha-D-glucosamine contacts are provided by residues 9–12 (LAAG), Lys-23, Gln-73, and 78–79 (GT). A Mg(2+)-binding site is contributed by Asp-103. Positions 140, 155, 170, and 228 each coordinate UDP-N-acetyl-alpha-D-glucosamine. Asn-228 provides a ligand contact to Mg(2+). Positions 231-251 (VALSQAEIIMKNRINRKNMVN) are linker. The N-acetyltransferase stretch occupies residues 252-459 (GVTIIDPSNT…VDQLLNKKKS (208 aa)). The UDP-N-acetyl-alpha-D-glucosamine site is built by Arg-333 and Lys-351. His-363 serves as the catalytic Proton acceptor. Residues Tyr-366 and Asn-377 each coordinate UDP-N-acetyl-alpha-D-glucosamine. Acetyl-CoA contacts are provided by residues 386-387 (NY), Ala-423, and Arg-440.

The protein in the N-terminal section; belongs to the N-acetylglucosamine-1-phosphate uridyltransferase family. In the C-terminal section; belongs to the transferase hexapeptide repeat family. Homotrimer. Requires Mg(2+) as cofactor.

Its subcellular location is the cytoplasm. The catalysed reaction is alpha-D-glucosamine 1-phosphate + acetyl-CoA = N-acetyl-alpha-D-glucosamine 1-phosphate + CoA + H(+). It carries out the reaction N-acetyl-alpha-D-glucosamine 1-phosphate + UTP + H(+) = UDP-N-acetyl-alpha-D-glucosamine + diphosphate. The protein operates within nucleotide-sugar biosynthesis; UDP-N-acetyl-alpha-D-glucosamine biosynthesis; N-acetyl-alpha-D-glucosamine 1-phosphate from alpha-D-glucosamine 6-phosphate (route II): step 2/2. Its pathway is nucleotide-sugar biosynthesis; UDP-N-acetyl-alpha-D-glucosamine biosynthesis; UDP-N-acetyl-alpha-D-glucosamine from N-acetyl-alpha-D-glucosamine 1-phosphate: step 1/1. It functions in the pathway bacterial outer membrane biogenesis; LPS lipid A biosynthesis. In terms of biological role, catalyzes the last two sequential reactions in the de novo biosynthetic pathway for UDP-N-acetylglucosamine (UDP-GlcNAc). The C-terminal domain catalyzes the transfer of acetyl group from acetyl coenzyme A to glucosamine-1-phosphate (GlcN-1-P) to produce N-acetylglucosamine-1-phosphate (GlcNAc-1-P), which is converted into UDP-GlcNAc by the transfer of uridine 5-monophosphate (from uridine 5-triphosphate), a reaction catalyzed by the N-terminal domain. The polypeptide is Bifunctional protein GlmU (Bacillus anthracis (strain A0248)).